The following is a 375-amino-acid chain: Succinyl-diaminopimelate desuccinylase (375 aa).

Histidine 66 provides a ligand contact to Zn(2+). The active site involves aspartate 68. Aspartate 99 contacts Zn(2+). The active-site Proton acceptor is the glutamate 133. 3 residues coordinate Zn(2+): glutamate 134, glutamate 162, and histidine 348.

This sequence belongs to the peptidase M20A family. DapE subfamily. As to quaternary structure, homodimer. It depends on Zn(2+) as a cofactor. The cofactor is Co(2+).

The catalysed reaction is N-succinyl-(2S,6S)-2,6-diaminopimelate + H2O = (2S,6S)-2,6-diaminopimelate + succinate. It participates in amino-acid biosynthesis; L-lysine biosynthesis via DAP pathway; LL-2,6-diaminopimelate from (S)-tetrahydrodipicolinate (succinylase route): step 3/3. Its function is as follows. Catalyzes the hydrolysis of N-succinyl-L,L-diaminopimelic acid (SDAP), forming succinate and LL-2,6-diaminopimelate (DAP), an intermediate involved in the bacterial biosynthesis of lysine and meso-diaminopimelic acid, an essential component of bacterial cell walls. This chain is Succinyl-diaminopimelate desuccinylase, found in Photorhabdus laumondii subsp. laumondii (strain DSM 15139 / CIP 105565 / TT01) (Photorhabdus luminescens subsp. laumondii).